The following is a 696-amino-acid chain: UvrABC system protein C (696 aa).

The GIY-YIG domain maps to 16–95 (TEPGVYKFRD…IKRFDPRFNV (80 aa)). Residues 208 to 243 (DKVTRKLNADMMAAAEELDFERAARLRDDLEAIDKV) form the UVR domain.

The protein belongs to the UvrC family. In terms of assembly, interacts with UvrB in an incision complex.

It is found in the cytoplasm. Functionally, the UvrABC repair system catalyzes the recognition and processing of DNA lesions. UvrC both incises the 5' and 3' sides of the lesion. The N-terminal half is responsible for the 3' incision and the C-terminal half is responsible for the 5' incision. The protein is UvrABC system protein C of Corynebacterium glutamicum (strain ATCC 13032 / DSM 20300 / JCM 1318 / BCRC 11384 / CCUG 27702 / LMG 3730 / NBRC 12168 / NCIMB 10025 / NRRL B-2784 / 534).